The primary structure comprises 249 residues: MEGFSGLFAASEPSSIPSAPGPPSVVPTCTGAFVSGKTQTSTPTVPGPPLPIPPPLSSSSSGEDSSRRPAAGPFYILRELPGLSDLTGSVNLILHYNLEHSFSKFCGKKMKEKLSNFLPDLPGMIDTPGAQDNSSLRSLIEKPPICGNSFTPLTGALLTGFRLHTGPLPEQCRLMHIQPPKKKNKKHKQSRTQEPAPPETPSDSDHRKKKKKQREDDPERRRKKKDKKKKKSRHSPEHPGAGSSQSGLR.

Disordered regions lie at residues methionine 1–arginine 68 and glutamine 178–arginine 249. Over residues alanine 9–serine 18 the composition is skewed to low complexity. Pro residues predominate over residues valine 45–leucine 56. 2 stretches are compositionally biased toward basic residues: residues proline 179–serine 190 and arginine 221–arginine 233.

Belongs to the Mediator complex subunit 19 family. As to quaternary structure, component of the Mediator complex.

It localises to the nucleus. Component of the Mediator complex, a coactivator involved in the regulated transcription of nearly all RNA polymerase II-dependent genes. Mediator functions as a bridge to convey information from gene-specific regulatory proteins to the basal RNA polymerase II transcription machinery. Mediator is recruited to promoters by direct interactions with regulatory proteins and serves as a scaffold for the assembly of a functional preinitiation complex with RNA polymerase II and the general transcription factors. This Xenopus tropicalis (Western clawed frog) protein is Mediator of RNA polymerase II transcription subunit 19 (med19).